We begin with the raw amino-acid sequence, 122 residues long: UPF0102 protein XCV0816 (122 aa).

The protein belongs to the UPF0102 family.

This Xanthomonas euvesicatoria pv. vesicatoria (strain 85-10) (Xanthomonas campestris pv. vesicatoria) protein is UPF0102 protein XCV0816.